Here is a 177-residue protein sequence, read N- to C-terminus: ATP-dependent protease subunit HslV (177 aa).

T6 is an active-site residue. Positions 162, 165, and 168 each coordinate Na(+).

Belongs to the peptidase T1B family. HslV subfamily. A double ring-shaped homohexamer of HslV is capped on each side by a ring-shaped HslU homohexamer. The assembly of the HslU/HslV complex is dependent on binding of ATP.

The protein localises to the cytoplasm. The enzyme catalyses ATP-dependent cleavage of peptide bonds with broad specificity.. Allosterically activated by HslU binding. In terms of biological role, protease subunit of a proteasome-like degradation complex believed to be a general protein degrading machinery. This is ATP-dependent protease subunit HslV from Desulfovibrio desulfuricans (strain ATCC 27774 / DSM 6949 / MB).